The following is a 632-amino-acid chain: DNA topoisomerase 4 subunit B (632 aa).

Residues Tyr5, Asn42, Asp69, 110–116 (GLHGVGI), and Lys334 each bind ATP. A Toprim domain is found at 412–525 (TELFLVEGDS…DGHVYVAMPP (114 aa)). Positions 418, 490, and 492 each coordinate Mg(2+).

Belongs to the type II topoisomerase family. ParE type 1 subfamily. As to quaternary structure, heterotetramer composed of ParC and ParE. Mg(2+) is required as a cofactor. The cofactor is Mn(2+). Ca(2+) serves as cofactor.

The enzyme catalyses ATP-dependent breakage, passage and rejoining of double-stranded DNA.. In terms of biological role, topoisomerase IV is essential for chromosome segregation. It relaxes supercoiled DNA. Performs the decatenation events required during the replication of a circular DNA molecule. The sequence is that of DNA topoisomerase 4 subunit B from Haemophilus influenzae (strain ATCC 51907 / DSM 11121 / KW20 / Rd).